The sequence spans 117 residues: Putative membrane protein insertion efficiency factor (117 aa).

The protein belongs to the UPF0161 family.

Its subcellular location is the cell inner membrane. Functionally, could be involved in insertion of integral membrane proteins into the membrane. This chain is Putative membrane protein insertion efficiency factor, found in Helicobacter pylori (strain ATCC 700392 / 26695) (Campylobacter pylori).